The primary structure comprises 85 residues: U4-theraphotoxin-Hhn1a (85 aa).

A signal peptide spans 1-22 (MKVTLIAILTCAAALVLHTTAA). Residues 23–48 (EELEAESQLMEVGMPDTELAAVDEER) constitute a propeptide that is removed on maturation. 3 disulfide bridges follow: Cys52/Cys66, Cys56/Cys77, and Cys71/Cys82.

The protein belongs to the neurotoxin 12 (Hwtx-2) family. 02 (Hwtx-2) subfamily. Monomer. In terms of tissue distribution, expressed by the venom gland.

Its subcellular location is the secreted. Its function is as follows. Neurotoxin active on both insects and mammals. This is U4-theraphotoxin-Hhn1a from Cyriopagopus hainanus (Chinese bird spider).